The following is a 128-amino-acid chain: Large ribosomal subunit protein bL21 (128 aa).

The segment at 104–128 (GKKPSVGPRPKRVKAEPAPAADAAE) is disordered. The span at 119–128 (EPAPAADAAE) shows a compositional bias: low complexity.

The protein belongs to the bacterial ribosomal protein bL21 family. As to quaternary structure, part of the 50S ribosomal subunit. Contacts protein L20.

This protein binds to 23S rRNA in the presence of protein L20. The sequence is that of Large ribosomal subunit protein bL21 from Rhodopseudomonas palustris (strain BisB5).